Reading from the N-terminus, the 281-residue chain is MKFVGAHVSAAGGVDQAVLRAHEIKATAFALFTKNQRQWKAAPLSTESIDKFKKNCEIYGYGPAQILPHDSYLINLGHPEEEALEKSRAAFLDEMQRCEQLGIELLNFHPGSHLKKIDVDKCLQRIAESINITLDKTQNVTAVIENTAGQGTNLGYRFEHLAAIIDGVEDKSRVGVCIDTCHTFAAGYDLRTVEDCEKTFAEFDNIVGFQYLKAMHLNDAKSELASRVDRHHSLGQGNIGKVPFTYIMQDIRFDGIPLILETINPDIWPEEIAWLKSQQTQ.

Histidine 69, histidine 109, glutamate 145, aspartate 179, histidine 182, histidine 216, aspartate 229, histidine 231, and glutamate 261 together coordinate Zn(2+).

Belongs to the AP endonuclease 2 family. Requires Zn(2+) as cofactor.

It catalyses the reaction Endonucleolytic cleavage to 5'-phosphooligonucleotide end-products.. Endonuclease IV plays a role in DNA repair. It cleaves phosphodiester bonds at apurinic or apyrimidinic (AP) sites, generating a 3'-hydroxyl group and a 5'-terminal sugar phosphate. The sequence is that of Probable endonuclease 4 from Proteus mirabilis (strain HI4320).